A 394-amino-acid chain; its full sequence is Small ribosomal subunit protein mS79 (rPPR3b) (394 aa).

The transit peptide at 1–24 (MSSLSRFLLRGNFSFSTHTNRRFF) directs the protein to the mitochondrion. PPR repeat units follow at residues 105-139 (KEGF…NCKR), 140-170 (TALS…LPGK), 176-210 (DVAS…GLKP), 211-245 (DHIT…NVKR), 246-280 (DIRS…ELKP), 281-315 (DVFT…GCRP), 316-350 (LKFV…RLLV), and 351-385 (DEAV…DYLQ).

It belongs to the PPR family. P subfamily. In terms of assembly, component of the mitochondrial ribosome small subunit.

The protein resides in the mitochondrion. The polypeptide is Small ribosomal subunit protein mS79 (rPPR3b) (Arabidopsis thaliana (Mouse-ear cress)).